We begin with the raw amino-acid sequence, 552 residues long: Putative transport protein ECA4401 (552 aa).

The next 5 membrane-spanning stretches (helical) occupy residues 4 to 24 (IALT…IGNW), 26 to 46 (IYGV…VGHV), 65 to 85 (FGLI…FFSS), 90 to 112 (GLRL…VMLH), and 158 to 178 (TGYA…MWLM). RCK C-terminal domains lie at 191 to 276 (KQFE…VIGN) and 279 to 361 (ETSL…IVGN). Helical transmembrane passes span 371-391 (MLPV…PLMV), 393-413 (GFPV…ALVL), 439-459 (IVLF…DTLL), 464-484 (VWWI…VGIL), 493-513 (YLTL…LAFA), and 530-550 (VYPL…VLFL).

The protein belongs to the AAE transporter (TC 2.A.81) family. YidE subfamily.

Its subcellular location is the cell membrane. In Pectobacterium atrosepticum (strain SCRI 1043 / ATCC BAA-672) (Erwinia carotovora subsp. atroseptica), this protein is Putative transport protein ECA4401.